We begin with the raw amino-acid sequence, 98 residues long: MLKMNNLTLEKKAQTRNLRKTLQGIVIRTSPKTIMVEVETAYKHKLYAKRFKKRKKFNTHDEKNLAEVGDFVKIAECRPISKTKHFRLVEVLQKKGEI.

The protein belongs to the universal ribosomal protein uS17 family. As to quaternary structure, part of the 30S ribosomal subunit.

One of the primary rRNA binding proteins, it binds specifically to the 5'-end of 16S ribosomal RNA. This Mesomycoplasma hyopneumoniae (strain 232) (Mycoplasma hyopneumoniae) protein is Small ribosomal subunit protein uS17.